A 215-amino-acid chain; its full sequence is Urease accessory protein UreE (215 aa).

The interval 134 to 215 (FDPEGGAYAP…HGHSHKHDHK (82 aa)) is disordered. Basic and acidic residues predominate over residues 164–206 (GHHDHADHEHDHKHDHGKHDHAGHDHAHDHHVHDEHCGHDHGH).

This sequence belongs to the UreE family.

It is found in the cytoplasm. Its function is as follows. Involved in urease metallocenter assembly. Binds nickel. Probably functions as a nickel donor during metallocenter assembly. The chain is Urease accessory protein UreE from Rhodopseudomonas palustris (strain HaA2).